We begin with the raw amino-acid sequence, 173 residues long: Large ribosomal subunit protein uL10 (173 aa).

The protein belongs to the universal ribosomal protein uL10 family. Part of the ribosomal stalk of the 50S ribosomal subunit. The N-terminus interacts with L11 and the large rRNA to form the base of the stalk. The C-terminus forms an elongated spine to which L12 dimers bind in a sequential fashion forming a multimeric L10(L12)X complex.

Forms part of the ribosomal stalk, playing a central role in the interaction of the ribosome with GTP-bound translation factors. This chain is Large ribosomal subunit protein uL10, found in Christiangramia forsetii (strain DSM 17595 / CGMCC 1.15422 / KT0803) (Gramella forsetii).